The primary structure comprises 257 residues: Distal membrane-arm assembly complex protein 2 (257 aa).

Phosphoserine is present on serine 253.

The protein belongs to the ATP synthase subunit s family. As to quaternary structure, interacts with incompletely assembled mitochondrial NADH:ubiquinone oxidoreductase complex (complex I).

The protein resides in the mitochondrion. Required for the assembly of the mitochondrial NADH:ubiquinone oxidoreductase complex (complex I). Involved in the assembly of the distal region of complex I. This chain is Distal membrane-arm assembly complex protein 2, found in Homo sapiens (Human).